A 366-amino-acid polypeptide reads, in one-letter code: Alanine racemase (366 aa).

Lysine 40 (proton acceptor; specific for D-alanine) is an active-site residue. At lysine 40 the chain carries N6-(pyridoxal phosphate)lysine. Residue arginine 136 participates in substrate binding. Tyrosine 263 serves as the catalytic Proton acceptor; specific for L-alanine. A substrate-binding site is contributed by methionine 310.

The protein belongs to the alanine racemase family. Pyridoxal 5'-phosphate serves as cofactor.

The enzyme catalyses L-alanine = D-alanine. Its pathway is amino-acid biosynthesis; D-alanine biosynthesis; D-alanine from L-alanine: step 1/1. Catalyzes the interconversion of L-alanine and D-alanine. May also act on other amino acids. The protein is Alanine racemase (alr) of Streptococcus pyogenes serotype M28 (strain MGAS6180).